The following is a 347-amino-acid chain: Phosphate acyltransferase (347 aa).

This sequence belongs to the PlsX family. In terms of assembly, homodimer. Probably interacts with PlsY.

The protein localises to the cytoplasm. The enzyme catalyses a fatty acyl-[ACP] + phosphate = an acyl phosphate + holo-[ACP]. Its pathway is lipid metabolism; phospholipid metabolism. In terms of biological role, catalyzes the reversible formation of acyl-phosphate (acyl-PO(4)) from acyl-[acyl-carrier-protein] (acyl-ACP). This enzyme utilizes acyl-ACP as fatty acyl donor, but not acyl-CoA. The chain is Phosphate acyltransferase from Methylobacillus flagellatus (strain ATCC 51484 / DSM 6875 / VKM B-1610 / KT).